We begin with the raw amino-acid sequence, 745 residues long: Double-stranded RNA-specific editase B2 (745 aa).

Disordered stretches follow at residues 1–35 and 50–104; these read MASVLGSGRGSGGLSSQLKCKSKRRRRRRSKRKDK and SPGT…PLEE. The segment covering 20–34 has biased composition (basic residues); that stretch reads CKSKRRRRRRSKRKD. Residues 23-35 form an R-domain (ssRNA-binding) region; sequence KRRRRRRSKRKDK. 2 consecutive DRBM domains span residues 125-191 and 283-347; these read TPKN…SFVQ and NPVV…ALFD. The A to I editase domain maps to 414–741; sequence VLSSGTKCIS…VRKPPEQDQF (328 aa). Position 438 (H438) interacts with Zn(2+). E440 functions as the Proton donor in the catalytic mechanism. Positions 496 and 561 each coordinate Zn(2+).

Brain specific.

The protein resides in the nucleus. Its function is as follows. Lacks editing activity. It prevents the binding of other ADAR enzymes to targets in vitro, and decreases the efficiency of these enzymes. Capable of binding to dsRNA but also to ssRNA. This is Double-stranded RNA-specific editase B2 (Adarb2) from Mus musculus (Mouse).